The chain runs to 421 residues: Testin (421 aa).

In terms of domain architecture, PET spans 92-199 (MILTNPVAAK…GDVKLPREMD (108 aa)). Positions 133–164 (EKQPVAGSEGAQYRKKQLAKQLPAHDQDPSKC) are disordered. The segment covering 155 to 164 (PAHDQDPSKC) has biased composition (basic and acidic residues). LIM zinc-binding domains follow at residues 234-297 (YSCY…CDSE), 299-359 (PRCA…NHAV), and 362-421 (QGCH…KMMS).

Belongs to the prickle / espinas / testin family. Interacts via LIM domain 1 with ZYX. Interacts (via LIM domain 3) with ENAH and VASP. Interacts with ALKBH4, talin, actin, alpha-actinin, GRIP1 and PXN. Interacts (via LIM domain 2) with ACTL7A (via N-terminus). Heterodimer with ACTL7A; the heterodimer interacts with ENAH to form a heterotrimer.

It is found in the cytoplasm. The protein localises to the cell junction. It localises to the focal adhesion. Scaffold protein that may play a role in cell adhesion, cell spreading and in the reorganization of the actin cytoskeleton. Plays a role in the regulation of cell proliferation. May act as a tumor suppressor. In Equus caballus (Horse), this protein is Testin (TES).